Consider the following 217-residue polypeptide: N-(5'-phosphoribosyl)anthranilate isomerase (217 aa).

The protein belongs to the TrpF family.

The catalysed reaction is N-(5-phospho-beta-D-ribosyl)anthranilate = 1-(2-carboxyphenylamino)-1-deoxy-D-ribulose 5-phosphate. The protein operates within amino-acid biosynthesis; L-tryptophan biosynthesis; L-tryptophan from chorismate: step 3/5. The chain is N-(5'-phosphoribosyl)anthranilate isomerase from Chlorobium luteolum (strain DSM 273 / BCRC 81028 / 2530) (Pelodictyon luteolum).